Consider the following 107-residue polypeptide: uncharacterized protein (107 aa).

The 56-residue stretch at 13–68 (LQEEFLEPLSLKISDLAQILDVHRNTASNIVNNSSRITLEMAVKLAKVFDTTPEFW) folds into the HTH cro/C1-type domain. The H-T-H motif DNA-binding region spans 24–43 (KISDLAQILDVHRNTASNIV).

Belongs to the VapA/VapI family.

This is an uncharacterized protein from Haemophilus influenzae (strain ATCC 51907 / DSM 11121 / KW20 / Rd).